The primary structure comprises 416 residues: MPMVTVKYNFQLFKCKVSLNSTLNDVLHQSIQFFQLHTSSNDWSLIHLDKPVPLDLPWRLLNLPTGVNLELSKSSNFPVANKTNREDIPFNTIKIRFQIPGRDSVVKEMPSDQPIAPILRQMSGAAGDDFKIQVFSKIIEFKTIKDENLTLENLGIQEPSSVRLIFNNTSHSEGISANSAIHPKQTPPTMTNPETVASLPPHELHKPSVFLPSDEPLAVIKDQIEDEEDYELTVEQAKKYQKMLSSKAGTLGGPILTKRLREQSANNLPKKNKAISECLLRVKFPDRSHIQIAFKPNEDMRTVYNVVSQFLIDENMPFTLNQSHPFKPLAKDDKKLLDDLEFGSKTMLLFETNSNSNGPLIKAHLLEDAQKITHETRTTPSVNTINKSNPQGPSDNATSIKKTLNRVPKWMKLSKK.

The UBX domain maps to 273–350; it reads KAISECLLRV…EFGSKTMLLF (78 aa). A disordered region spans residues 376 to 402; sequence TRTTPSVNTINKSNPQGPSDNATSIKK. Residues 378–402 are compositionally biased toward polar residues; sequence TTPSVNTINKSNPQGPSDNATSIKK.

The protein resides in the nucleus. It localises to the cytoplasm. Functionally, involved in CDC48-dependent protein degradation through the ubiquitin/proteasome pathway. The protein is UBX domain-containing protein 4 (UBX4) of Saccharomyces cerevisiae (strain ATCC 204508 / S288c) (Baker's yeast).